A 198-amino-acid polypeptide reads, in one-letter code: Peptidyl-tRNA hydrolase (198 aa).

Tyr-17 contributes to the tRNA binding site. The active-site Proton acceptor is the His-22. Positions 74, 76, and 122 each coordinate tRNA.

The protein belongs to the PTH family. In terms of assembly, monomer.

Its subcellular location is the cytoplasm. The enzyme catalyses an N-acyl-L-alpha-aminoacyl-tRNA + H2O = an N-acyl-L-amino acid + a tRNA + H(+). Its function is as follows. Hydrolyzes ribosome-free peptidyl-tRNAs (with 1 or more amino acids incorporated), which drop off the ribosome during protein synthesis, or as a result of ribosome stalling. Functionally, catalyzes the release of premature peptidyl moieties from peptidyl-tRNA molecules trapped in stalled 50S ribosomal subunits, and thus maintains levels of free tRNAs and 50S ribosomes. The polypeptide is Peptidyl-tRNA hydrolase (Kineococcus radiotolerans (strain ATCC BAA-149 / DSM 14245 / SRS30216)).